Here is a 490-residue protein sequence, read N- to C-terminus: Betaine aldehyde dehydrogenase (490 aa).

3 residues coordinate K(+): Thr26, Ile27, and Asp93. 150-152 (GAW) contacts NAD(+). Lys162 acts as the Charge relay system in catalysis. Position 176–179 (176–179 (KPSE)) interacts with NAD(+). Val180 contributes to the K(+) binding site. 230–233 (GTST) lines the NAD(+) pocket. Leu246 is a binding site for K(+). The active-site Proton acceptor is the Glu252. Residues Gly254, Cys286, and Glu387 each coordinate NAD(+). Catalysis depends on Cys286, which acts as the Nucleophile. Cys286 is subject to Cysteine sulfenic acid (-SOH). The K(+) site is built by Lys457 and Gly460. Glu464 functions as the Charge relay system in the catalytic mechanism.

The protein belongs to the aldehyde dehydrogenase family. In terms of assembly, dimer of dimers. K(+) serves as cofactor.

It catalyses the reaction betaine aldehyde + NAD(+) + H2O = glycine betaine + NADH + 2 H(+). It functions in the pathway amine and polyamine biosynthesis; betaine biosynthesis via choline pathway; betaine from betaine aldehyde: step 1/1. Involved in the biosynthesis of the osmoprotectant glycine betaine. Catalyzes the irreversible oxidation of betaine aldehyde to the corresponding acid. In Pseudomonas paraeruginosa (strain DSM 24068 / PA7) (Pseudomonas aeruginosa (strain PA7)), this protein is Betaine aldehyde dehydrogenase.